The chain runs to 394 residues: Ribulose bisphosphate carboxylase large chain (394 aa).

Position 5 is an N6,N6,N6-trimethyllysine (lysine 5). Residues asparagine 114 and threonine 164 each contribute to the substrate site. Lysine 166 functions as the Proton acceptor in the catalytic mechanism. Lysine 168 is a substrate binding site. Positions 192, 194, and 195 each coordinate Mg(2+). The residue at position 192 (lysine 192) is an N6-carboxylysine. Catalysis depends on histidine 285, which acts as the Proton acceptor. Substrate contacts are provided by arginine 286, histidine 318, and serine 370.

It belongs to the RuBisCO large chain family. Type I subfamily. In terms of assembly, heterohexadecamer of 8 large chains and 8 small chains. Mg(2+) serves as cofactor.

The protein localises to the plastid. It localises to the chloroplast. It catalyses the reaction 2 (2R)-3-phosphoglycerate + 2 H(+) = D-ribulose 1,5-bisphosphate + CO2 + H2O. The catalysed reaction is D-ribulose 1,5-bisphosphate + O2 = 2-phosphoglycolate + (2R)-3-phosphoglycerate + 2 H(+). Its function is as follows. RuBisCO catalyzes two reactions: the carboxylation of D-ribulose 1,5-bisphosphate, the primary event in carbon dioxide fixation, as well as the oxidative fragmentation of the pentose substrate in the photorespiration process. Both reactions occur simultaneously and in competition at the same active site. The sequence is that of Ribulose bisphosphate carboxylase large chain (rbcL) from Euryale ferox (Gorgon plant).